Here is a 183-residue protein sequence, read N- to C-terminus: Peptide deformylase (183 aa).

Fe cation contacts are provided by C110 and H153. E154 is an active-site residue. H157 provides a ligand contact to Fe cation.

The protein belongs to the polypeptide deformylase family. The cofactor is Fe(2+).

The enzyme catalyses N-terminal N-formyl-L-methionyl-[peptide] + H2O = N-terminal L-methionyl-[peptide] + formate. Removes the formyl group from the N-terminal Met of newly synthesized proteins. Requires at least a dipeptide for an efficient rate of reaction. N-terminal L-methionine is a prerequisite for activity but the enzyme has broad specificity at other positions. This is Peptide deformylase from Listeria welshimeri serovar 6b (strain ATCC 35897 / DSM 20650 / CCUG 15529 / CIP 8149 / NCTC 11857 / SLCC 5334 / V8).